Reading from the N-terminus, the 380-residue chain is Cytochrome b (380 aa).

The next 4 helical transmembrane spans lie at 34 to 54 (FGSL…LLAM), 78 to 99 (WLIR…YLHI), 114 to 134 (WNTG…GYVL), and 179 to 199 (FFAL…IHLT). Heme b contacts are provided by His84 and His98. Heme b contacts are provided by His183 and His197. His202 lines the a ubiquinone pocket. A run of 4 helical transmembrane segments spans residues 227–247 (LKDI…ALFS), 289–309 (LGGV…PFLH), 321–341 (LSQL…WVGS), and 348–368 (FIII…ILFP).

The protein belongs to the cytochrome b family. In terms of assembly, the cytochrome bc1 complex contains 11 subunits: 3 respiratory subunits (MT-CYB, CYC1 and UQCRFS1), 2 core proteins (UQCRC1 and UQCRC2) and 6 low-molecular weight proteins (UQCRH/QCR6, UQCRB/QCR7, UQCRQ/QCR8, UQCR10/QCR9, UQCR11/QCR10 and a cleavage product of UQCRFS1). This cytochrome bc1 complex then forms a dimer. The cofactor is heme b.

It localises to the mitochondrion inner membrane. Its function is as follows. Component of the ubiquinol-cytochrome c reductase complex (complex III or cytochrome b-c1 complex) that is part of the mitochondrial respiratory chain. The b-c1 complex mediates electron transfer from ubiquinol to cytochrome c. Contributes to the generation of a proton gradient across the mitochondrial membrane that is then used for ATP synthesis. The polypeptide is Cytochrome b (MT-CYB) (Macronectes giganteus (Southern giant petrel)).